The chain runs to 222 residues: Deoxyribose-phosphate aldolase (222 aa).

The active-site Proton donor/acceptor is the aspartate 91. Lysine 153 serves as the catalytic Schiff-base intermediate with acetaldehyde. The active-site Proton donor/acceptor is lysine 182.

Belongs to the DeoC/FbaB aldolase family. DeoC type 1 subfamily.

It is found in the cytoplasm. The enzyme catalyses 2-deoxy-D-ribose 5-phosphate = D-glyceraldehyde 3-phosphate + acetaldehyde. It functions in the pathway carbohydrate degradation; 2-deoxy-D-ribose 1-phosphate degradation; D-glyceraldehyde 3-phosphate and acetaldehyde from 2-deoxy-alpha-D-ribose 1-phosphate: step 2/2. Functionally, catalyzes a reversible aldol reaction between acetaldehyde and D-glyceraldehyde 3-phosphate to generate 2-deoxy-D-ribose 5-phosphate. The polypeptide is Deoxyribose-phosphate aldolase (Mycoplasma capricolum subsp. capricolum (strain California kid / ATCC 27343 / NCTC 10154)).